Reading from the N-terminus, the 306-residue chain is Putative secretory carrier-associated membrane protein 1 (306 aa).

The tract at residues 1–60 (MAGRYDSNPFEEDDVNPFSEQARGKAGGQPSYGGGAFYMPNPRNVPSMSSNSRLSPLPPE) is disordered. The Cytoplasmic segment spans residues 1–141 (MAGRYDSNPF…EIPSHLQRMQ (141 aa)). The segment covering 25–36 (KAGGQPSYGGGA) has biased composition (gly residues). Residues 44–54 (NVPSMSSNSRL) show a composition bias toward polar residues. Positions 72–109 (LDSSKDLKNREKELQAREAELNKREKELKRREEAAARA) form a coiled coil. 4 consecutive transmembrane segments (helical) span residues 142–162 (YVAF…VIAV), 174–194 (IWLL…VLWY), 209–229 (FGLF…SAVA), and 257–277 (IFYF…IWVI). The Cytoplasmic portion of the chain corresponds to 278–306 (QQVYMYFRGSGKAAEMKRDATRGAMRAAF).

The protein belongs to the SCAMP family.

Its subcellular location is the cell membrane. It is found in the cytoplasmic vesicle. The protein localises to the secretory vesicle membrane. Its function is as follows. Probably involved in membrane trafficking. The sequence is that of Putative secretory carrier-associated membrane protein 1 (SCAMP1) from Oryza sativa subsp. indica (Rice).